Consider the following 36-residue polypeptide: Neuropeptide F (36 aa).

The residue at position 36 (Phe-36) is a Phenylalanine amide.

This sequence belongs to the NPY family. In terms of tissue distribution, central and peripheral nervous system, and muscular pharynx.

The protein localises to the secreted. May perform an important neurotransmitter function and may regulate muscular activity. The polypeptide is Neuropeptide F (Arthurdendyus triangulatus (New Zealand flatworm)).